The sequence spans 30 residues: Dicynthaurin (30 aa).

Thr-30 is subject to Threonine amide.

In terms of assembly, homodimer.

The protein localises to the secreted. In terms of biological role, shows antibacterial activity against both Gram-positive and Gram-negative bacteria. Its antimicrobial activity is optimal at NaCl concentrations below 100 mM, suggesting that the antimicrobial actions of this peptide may take place intracellularly rather than extracellularly. Has no activity against the fungus C.albicans. Has modest hemolytic activity. This chain is Dicynthaurin, found in Halocynthia aurantium (Sea peach).